Consider the following 765-residue polypeptide: Probable beta-glucosidase M (765 aa).

The N-terminal stretch at 1 to 19 is a signal peptide; that stretch reads MHSISALLSLLGGLALSSA. Residues asparagine 24, asparagine 71, asparagine 93, asparagine 126, and asparagine 258 are each glycosylated (N-linked (GlcNAc...) asparagine). Residue aspartate 286 is part of the active site. 6 N-linked (GlcNAc...) asparagine glycosylation sites follow: asparagine 314, asparagine 321, asparagine 432, asparagine 519, asparagine 541, and asparagine 647.

Belongs to the glycosyl hydrolase 3 family.

It localises to the secreted. It catalyses the reaction Hydrolysis of terminal, non-reducing beta-D-glucosyl residues with release of beta-D-glucose.. It participates in glycan metabolism; cellulose degradation. Functionally, beta-glucosidases are one of a number of cellulolytic enzymes involved in the degradation of cellulosic biomass. Catalyzes the last step releasing glucose from the inhibitory cellobiose. In Aspergillus niger (strain ATCC MYA-4892 / CBS 513.88 / FGSC A1513), this protein is Probable beta-glucosidase M (bglM).